Here is a 382-residue protein sequence, read N- to C-terminus: Succinate--CoA ligase [ADP-forming] subunit beta (382 aa).

Residues 9-240 (KELFSKYGVK…PRDVTEFEAY (232 aa)) form the ATP-grasp domain. ATP-binding positions include Lys-45, 52-54 (GRG), Val-94, and Glu-99. Positions 193 and 207 each coordinate Mg(2+). Substrate contacts are provided by residues Asn-260 and 317–319 (GIT).

Belongs to the succinate/malate CoA ligase beta subunit family. As to quaternary structure, heterotetramer of two alpha and two beta subunits. The cofactor is Mg(2+).

The enzyme catalyses succinate + ATP + CoA = succinyl-CoA + ADP + phosphate. The catalysed reaction is GTP + succinate + CoA = succinyl-CoA + GDP + phosphate. It functions in the pathway carbohydrate metabolism; tricarboxylic acid cycle; succinate from succinyl-CoA (ligase route): step 1/1. Succinyl-CoA synthetase functions in the citric acid cycle (TCA), coupling the hydrolysis of succinyl-CoA to the synthesis of either ATP or GTP and thus represents the only step of substrate-level phosphorylation in the TCA. The beta subunit provides nucleotide specificity of the enzyme and binds the substrate succinate, while the binding sites for coenzyme A and phosphate are found in the alpha subunit. This chain is Succinate--CoA ligase [ADP-forming] subunit beta, found in Pyrobaculum aerophilum (strain ATCC 51768 / DSM 7523 / JCM 9630 / CIP 104966 / NBRC 100827 / IM2).